The following is a 997-amino-acid chain: Glutamate [NMDA] receptor subunit 1 (997 aa).

Residues 1 to 26 (MAVAGFVFCRPLFGLAIVLLVAPIDA) form the signal peptide. The Extracellular segment spans residues 27 to 573 (AQRHTASDNP…TLVSFLQPFS (547 aa)). N-linked (GlcNAc...) asparagine glycosylation is found at asparagine 258, asparagine 314, asparagine 345, asparagine 397, asparagine 454, asparagine 481, and asparagine 501. Glycine contacts are provided by residues 530–532 (PLT) and arginine 537. The chain crosses the membrane as a helical span at residues 574-594 (NTLWILVMVSVHVVALVLYLL). Over 595–651 (DRFSPFGRFKLSHSDSNEEKALNLSSAVWFAWGVLLNSGIGEGTPRSFSARVLGMVW) the chain is Cytoplasmic. A helical membrane pass occupies residues 652-672 (AGFAMIIVASYTANLAAFLVL). Residues 673–831 (ERPKTKLSGI…KTPNTLGLKN (159 aa)) are Extracellular-facing. N-linked (GlcNAc...) asparagine glycosylation is present at asparagine 693. 2 residues coordinate glycine: serine 703 and aspartate 747. Residues 832-852 (MAGVFILVGVGIAGGVGLIII) traverse the membrane as a helical segment. The Cytoplasmic segment spans residues 853–997 (EVIYKKHQVK…YTSDVSHLVV (145 aa)). Residues 970-997 (LGKTRPQQSVLPPRYSPGYTSDVSHLVV) are disordered. Over residues 987 to 997 (GYTSDVSHLVV) the composition is skewed to polar residues.

This sequence belongs to the glutamate-gated ion channel (TC 1.A.10.1) family. Forms a heteromeric NMDA channel with Nmdar2.

The protein localises to the cell membrane. Its subcellular location is the postsynaptic cell membrane. It is found in the postsynaptic density. Functionally, NMDA receptor subtype of glutamate-gated ion channels with high calcium permeability and voltage-dependent sensitivity to magnesium. Mediated by glycine. This protein plays a key role in synaptic plasticity, synaptogenesis, excitotoxicity, memory acquisition and learning. It mediates neuronal functions in glutamate neurotransmission. Is involved in the cell surface targeting of NMDA receptors. Plays a role in associative learning and in long-term memory consolidation. The chain is Glutamate [NMDA] receptor subunit 1 from Drosophila sechellia (Fruit fly).